The primary structure comprises 388 residues: Chorismate synthase (388 aa).

Residues Arg-39 and Arg-45 each contribute to the NADP(+) site. FMN is bound by residues 130 to 132 (RSS), 251 to 252 (NA), Gly-296, 311 to 315 (KPIPT), and Arg-337.

The protein belongs to the chorismate synthase family. Homotetramer. Requires FMNH2 as cofactor.

It carries out the reaction 5-O-(1-carboxyvinyl)-3-phosphoshikimate = chorismate + phosphate. It participates in metabolic intermediate biosynthesis; chorismate biosynthesis; chorismate from D-erythrose 4-phosphate and phosphoenolpyruvate: step 7/7. Catalyzes the anti-1,4-elimination of the C-3 phosphate and the C-6 proR hydrogen from 5-enolpyruvylshikimate-3-phosphate (EPSP) to yield chorismate, which is the branch point compound that serves as the starting substrate for the three terminal pathways of aromatic amino acid biosynthesis. This reaction introduces a second double bond into the aromatic ring system. This chain is Chorismate synthase, found in Streptococcus pneumoniae (strain ATCC 700669 / Spain 23F-1).